The following is a 430-amino-acid chain: Serine--tRNA ligase (430 aa).

T236 to E238 is a binding site for L-serine. An ATP-binding site is contributed by R267–E269. E290 contributes to the L-serine binding site. Residue E354–S357 participates in ATP binding. S390 is an L-serine binding site.

It belongs to the class-II aminoacyl-tRNA synthetase family. Type-1 seryl-tRNA synthetase subfamily. Homodimer. The tRNA molecule binds across the dimer.

It localises to the cytoplasm. It catalyses the reaction tRNA(Ser) + L-serine + ATP = L-seryl-tRNA(Ser) + AMP + diphosphate + H(+). The catalysed reaction is tRNA(Sec) + L-serine + ATP = L-seryl-tRNA(Sec) + AMP + diphosphate + H(+). The protein operates within aminoacyl-tRNA biosynthesis; selenocysteinyl-tRNA(Sec) biosynthesis; L-seryl-tRNA(Sec) from L-serine and tRNA(Sec): step 1/1. Functionally, catalyzes the attachment of serine to tRNA(Ser). Is also able to aminoacylate tRNA(Sec) with serine, to form the misacylated tRNA L-seryl-tRNA(Sec), which will be further converted into selenocysteinyl-tRNA(Sec). The chain is Serine--tRNA ligase from Mannheimia succiniciproducens (strain KCTC 0769BP / MBEL55E).